A 683-amino-acid chain; its full sequence is uncharacterized protein (683 aa).

Coiled-coil stretches lie at residues 62-124 (PEHY…RKER), 155-259 (TTTN…KLSQ), and 346-376 (KKSLLTVKDSVQSLKTQLDELKRTLENDGDV). The tract at residues 213–237 (QDQVESQTGPKKRRKSPIENQPTAG) is disordered.

This is an uncharacterized protein from Invertebrate iridescent virus 3 (IIV-3).